The following is a 381-amino-acid chain: E3 ubiquitin-protein ligase RNF13 (381 aa).

A signal peptide spans 1-34; that stretch reads MLLSIGMLMLSATQVYTILTVQLFAFLNLLPVEA. Over 35–182 the chain is Lumenal; sequence DILAYNFENA…VPELSLPLEY (148 aa). Residues 64–160 enclose the PA domain; that stretch reads LKGFLINSKP…GESSANSLKD (97 aa). Asn-88 carries an N-linked (GlcNAc...) asparagine glycan. A helical transmembrane segment spans residues 183-203; sequence YLIPFLIIVGICLILIVIFMI. The Cytoplasmic segment spans residues 204–381; sequence TKFVQDRHRN…EQDYNIANTV (178 aa). An RING-type; atypical zinc finger spans residues 240-282; it reads CAICLEEYEDGDKLRILPCSHAYHCKCVDPWLTKTKKTCPVCK. A disordered region spans residues 285-381; it reads VVPSQGDSDS…EQDYNIANTV (97 aa). Over residues 317-328 the composition is skewed to polar residues; it reads SARTQSFGSLSE. Positions 339–357 are enriched in acidic residues; the sequence is SDYEDDDNEETDSSDADNE. A compositionally biased stretch (polar residues) spans 365–381; the sequence is VQLQPNGEQDYNIANTV.

In terms of assembly, interacts with ERN1. Post-translationally, autoubiquitinated. In terms of processing, N-glycosylated and also modified with chondroitin sulfate. In terms of tissue distribution, expressed in the brain, heart, kidney, liver and spleen. Higher expression in adult tissues compared to the embryonic counterparts.

The protein localises to the endoplasmic reticulum membrane. Its subcellular location is the late endosome membrane. It is found in the lysosome membrane. The protein resides in the nucleus inner membrane. It catalyses the reaction S-ubiquitinyl-[E2 ubiquitin-conjugating enzyme]-L-cysteine + [acceptor protein]-L-lysine = [E2 ubiquitin-conjugating enzyme]-L-cysteine + N(6)-ubiquitinyl-[acceptor protein]-L-lysine.. The protein operates within protein modification; protein ubiquitination. E3 ubiquitin-protein ligase that regulates cell proliferation. Involved in apoptosis regulation. Mediates ER stress-induced activation of JNK signaling pathway and apoptosis by promoting ERN1 activation and splicing of XBP1 mRNA. Also involved in protein trafficking and localization. The polypeptide is E3 ubiquitin-protein ligase RNF13 (Rnf13) (Mus musculus (Mouse)).